The chain runs to 361 residues: Phospho-N-acetylmuramoyl-pentapeptide-transferase (361 aa).

A run of 10 helical transmembrane segments spans residues Val18 to Leu38, Thr73 to Leu93, Phe97 to Tyr117, Leu135 to Gly155, Val168 to Ser188, Gly196 to Ala216, Gly235 to Trp255, Val263 to Val283, Leu288 to Val308, and Lys338 to Leu358.

The protein belongs to the glycosyltransferase 4 family. MraY subfamily. The cofactor is Mg(2+).

The protein resides in the cell inner membrane. It catalyses the reaction UDP-N-acetyl-alpha-D-muramoyl-L-alanyl-gamma-D-glutamyl-meso-2,6-diaminopimeloyl-D-alanyl-D-alanine + di-trans,octa-cis-undecaprenyl phosphate = di-trans,octa-cis-undecaprenyl diphospho-N-acetyl-alpha-D-muramoyl-L-alanyl-D-glutamyl-meso-2,6-diaminopimeloyl-D-alanyl-D-alanine + UMP. It participates in cell wall biogenesis; peptidoglycan biosynthesis. In terms of biological role, catalyzes the initial step of the lipid cycle reactions in the biosynthesis of the cell wall peptidoglycan: transfers peptidoglycan precursor phospho-MurNAc-pentapeptide from UDP-MurNAc-pentapeptide onto the lipid carrier undecaprenyl phosphate, yielding undecaprenyl-pyrophosphoryl-MurNAc-pentapeptide, known as lipid I. This is Phospho-N-acetylmuramoyl-pentapeptide-transferase from Coxiella burnetii (strain CbuK_Q154) (Coxiella burnetii (strain Q154)).